The following is a 168-amino-acid chain: uncharacterized protein (168 aa).

In terms of domain architecture, N-acetyltransferase spans 7 to 168 (ERIDTLKTGD…TAKGWPDISM (162 aa)).

This is an uncharacterized protein from Azospirillum brasilense.